A 365-amino-acid polypeptide reads, in one-letter code: DNA replication and repair protein RecF (365 aa).

30 to 37 (GRNAQGKT) is an ATP binding site.

The protein belongs to the RecF family.

It is found in the cytoplasm. In terms of biological role, the RecF protein is involved in DNA metabolism; it is required for DNA replication and normal SOS inducibility. RecF binds preferentially to single-stranded, linear DNA. It also seems to bind ATP. The chain is DNA replication and repair protein RecF from Streptococcus pneumoniae serotype 4 (strain ATCC BAA-334 / TIGR4).